We begin with the raw amino-acid sequence, 45 residues long: Mu-conotoxin-like Cal 12.1.2a (45 aa).

Intrachain disulfides connect C3/C16, C11/C28, C18/C33, and C27/C39. The residue at position 23 (P23) is a 4-hydroxyproline. Residues W37 and W38 each carry the 6'-bromotryptophan modification. A 4-hydroxyproline modification is found at P40. W44 carries the post-translational modification 6'-bromotryptophan.

As to expression, expressed by the venom duct.

Its subcellular location is the secreted. Mu-conotoxins block voltage-gated sodium channels. This toxin reversibly blocks voltage-gated sodium channel in cephalopods, with no alteration in the voltage dependence of sodium conductance or on the kinetics of inactivation. The sequence is that of Mu-conotoxin-like Cal 12.1.2a from Californiconus californicus (California cone).